Reading from the N-terminus, the 140-residue chain is Large ribosomal subunit protein uL14 (140 aa).

The protein belongs to the universal ribosomal protein uL14 family.

This is Large ribosomal subunit protein uL14 (RpL23-A) from Aedes aegypti (Yellowfever mosquito).